A 144-amino-acid polypeptide reads, in one-letter code: Large ribosomal subunit protein uL15 (144 aa).

A disordered region spans residues 1–53 (MRLNTLSPAVGAKSAPKRVGRGIGSGLGKTAGRGHKGQKSRSGGGVRPGFEGG). Composition is skewed to gly residues over residues 21–31 (RGIGSGLGKTA) and 42–52 (SGGGVRPGFEG).

It belongs to the universal ribosomal protein uL15 family. As to quaternary structure, part of the 50S ribosomal subunit.

Its function is as follows. Binds to the 23S rRNA. The polypeptide is Large ribosomal subunit protein uL15 (Shewanella amazonensis (strain ATCC BAA-1098 / SB2B)).